The following is a 91-amino-acid chain: Small ribosomal subunit protein uS19 (91 aa).

It belongs to the universal ribosomal protein uS19 family.

In terms of biological role, protein S19 forms a complex with S13 that binds strongly to the 16S ribosomal RNA. The chain is Small ribosomal subunit protein uS19 from Saccharophagus degradans (strain 2-40 / ATCC 43961 / DSM 17024).